Here is a 149-residue protein sequence, read N- to C-terminus: Nucleoside diphosphate kinase (149 aa).

The ATP site is built by lysine 9, phenylalanine 57, arginine 85, threonine 91, arginine 102, and asparagine 112. The active-site Pros-phosphohistidine intermediate is histidine 115.

The protein belongs to the NDK family. In terms of assembly, homotetramer. The cofactor is Mg(2+).

It localises to the cytoplasm. It carries out the reaction a 2'-deoxyribonucleoside 5'-diphosphate + ATP = a 2'-deoxyribonucleoside 5'-triphosphate + ADP. It catalyses the reaction a ribonucleoside 5'-diphosphate + ATP = a ribonucleoside 5'-triphosphate + ADP. Its function is as follows. Major role in the synthesis of nucleoside triphosphates other than ATP. The ATP gamma phosphate is transferred to the NDP beta phosphate via a ping-pong mechanism, using a phosphorylated active-site intermediate. The chain is Nucleoside diphosphate kinase from Nostoc punctiforme (strain ATCC 29133 / PCC 73102).